Consider the following 281-residue polypeptide: Pantothenate synthetase (281 aa).

30 to 37 lines the ATP pocket; sequence MGYLHEGH. Catalysis depends on His37, which acts as the Proton donor. Gln61 contacts (R)-pantoate. Gln61 serves as a coordination point for beta-alanine. ATP is bound at residue 147 to 150; it reads GEKD. Gln153 contributes to the (R)-pantoate binding site. ATP-binding positions include Ile176 and 184-187; that span reads KSSR.

It belongs to the pantothenate synthetase family. Homodimer.

The protein resides in the cytoplasm. The catalysed reaction is (R)-pantoate + beta-alanine + ATP = (R)-pantothenate + AMP + diphosphate + H(+). Its pathway is cofactor biosynthesis; (R)-pantothenate biosynthesis; (R)-pantothenate from (R)-pantoate and beta-alanine: step 1/1. Catalyzes the condensation of pantoate with beta-alanine in an ATP-dependent reaction via a pantoyl-adenylate intermediate. This chain is Pantothenate synthetase, found in Clostridium botulinum (strain Kyoto / Type A2).